Consider the following 239-residue polypeptide: Increased recombination centers protein 22-1 (239 aa).

Positions 1-19 (MKLSTIFTAFAATIATVAG) are cleaved as a signal peptide. Topologically, residues 20 to 161 (YETTGSKQTV…AAVSFFDPRL (142 aa)) are lumenal. The chain crosses the membrane as a helical span at residues 162–182 (IFLELVLLITFAGLIYVGYEI). Over 183–239 (WGKQYFKGVASVKAKKVSAAKASSPVASGPSTTSATGYDTNWIPESHLKQKKTKKVN) the chain is Cytoplasmic. Residues 201-213 (AAKASSPVASGPS) show a composition bias toward low complexity. Residues 201-222 (AAKASSPVASGPSTTSATGYDT) form a disordered region.

It belongs to the IRC22 family.

Its subcellular location is the endoplasmic reticulum membrane. Its function is as follows. Is probably involved in a pathway contributing to genomic integrity. The chain is Increased recombination centers protein 22-1 (IRC22-1) from Candida albicans (strain WO-1) (Yeast).